Consider the following 136-residue polypeptide: Cytokine-like protein 1 (136 aa).

Residues 1–22 (MRTPGPLPVLLLLLAGAPAARP) form the signal peptide.

Specifically expressed in CD34+ hematopoietic cells.

Its subcellular location is the secreted. The protein is Cytokine-like protein 1 (CYTL1) of Homo sapiens (Human).